A 133-amino-acid polypeptide reads, in one-letter code: MIVDTSAIIAILRDEDDAAAYADALANADVRRLSAASYLECGIVLDSQRDPVISRALDELIEEAEFVVEPVTERQARLARAAYADFGRGSGHPAGLNFGDCLSYALAIDRREPLLWKGNDFGHTGVQRALDRR.

In terms of domain architecture, PINc spans 1–124 (MIVDTSAIIA…LWKGNDFGHT (124 aa)). 2 residues coordinate Mg(2+): Asp4 and Asp100.

This sequence belongs to the PINc/VapC protein family. Mg(2+) serves as cofactor.

Its function is as follows. Toxic component of a type II toxin-antitoxin (TA) system. An RNase. Upon expression in M.smegmatis inhibits colony formation. Its toxic effect is neutralized by coexpression with cognate antitoxin VapB28. The polypeptide is Ribonuclease VapC28 (Mycobacterium tuberculosis (strain ATCC 25618 / H37Rv)).